Reading from the N-terminus, the 668-residue chain is Probable serine/threonine-protein kinase abkB (668 aa).

Disordered stretches follow at residues 88-111 (YTNIGGTSPNRQSVPENSTTKTTA) and 132-162 (EVEEEIIDKNERGKEQEQENKQQKEQKDDNK). Positions 91-105 (IGGTSPNRQSVPENS) are enriched in polar residues. Residues 131-163 (KEVEEEIIDKNERGKEQEQENKQQKEQKDDNKS) are a coiled coil. Over residues 138–162 (IDKNERGKEQEQENKQQKEQKDDNK) the composition is skewed to basic and acidic residues. Positions 314-668 (DFERLPINSA…EIPSTYHHHH (355 aa)) constitute a Protein kinase domain. ATP-binding positions include 320–328 (INSASLAQV) and Lys-346. Asp-478 acts as the Proton acceptor in catalysis.

Belongs to the protein kinase superfamily. ADCK protein kinase family.

The sequence is that of Probable serine/threonine-protein kinase abkB (abkB) from Dictyostelium discoideum (Social amoeba).